Reading from the N-terminus, the 153-residue chain is Large ribosomal subunit protein uL15 (153 aa).

Residues 15–42 (ARRIVGRGSSSGRGTTSGRGTKGQQARA) are disordered. The span at 23-35 (SSSGRGTTSGRGT) shows a compositional bias: gly residues.

It belongs to the universal ribosomal protein uL15 family. In terms of assembly, part of the 50S ribosomal subunit.

Binds to the 23S rRNA. The protein is Large ribosomal subunit protein uL15 of Treponema pallidum (strain Nichols).